A 315-amino-acid chain; its full sequence is Methionyl-tRNA formyltransferase (315 aa).

113–116 (SLLP) lines the (6S)-5,6,7,8-tetrahydrofolate pocket.

The protein belongs to the Fmt family.

It carries out the reaction L-methionyl-tRNA(fMet) + (6R)-10-formyltetrahydrofolate = N-formyl-L-methionyl-tRNA(fMet) + (6S)-5,6,7,8-tetrahydrofolate + H(+). Functionally, attaches a formyl group to the free amino group of methionyl-tRNA(fMet). The formyl group appears to play a dual role in the initiator identity of N-formylmethionyl-tRNA by promoting its recognition by IF2 and preventing the misappropriation of this tRNA by the elongation apparatus. The sequence is that of Methionyl-tRNA formyltransferase from Photorhabdus laumondii subsp. laumondii (strain DSM 15139 / CIP 105565 / TT01) (Photorhabdus luminescens subsp. laumondii).